Here is a 2282-residue protein sequence, read N- to C-terminus: Protein Ycf2 (2282 aa).

1635-1642 (GSIGTGRS) contacts ATP.

This sequence belongs to the Ycf2 family.

It localises to the plastid. Its subcellular location is the chloroplast stroma. Functionally, probable ATPase of unknown function. Its presence in a non-photosynthetic plant (Epifagus virginiana) and experiments in tobacco indicate that it has an essential function which is probably not related to photosynthesis. In Populus alba (White poplar), this protein is Protein Ycf2.